The chain runs to 343 residues: Protease HtpX homolog (343 aa).

2 consecutive transmembrane segments (helical) span residues 7–24 and 29–46; these read TMLL…GYLV and GMVV…FSYW. His-130 is a Zn(2+) binding site. The active site involves Glu-131. His-134 contacts Zn(2+). 2 helical membrane passes run 145-165 and 177-197; these read LTAT…LMGM and GAGM…AMLV. Glu-206 contacts Zn(2+). Positions 308–343 are disordered; sequence NLEDEDLNPEAQNGFTHNQKKKTVRRGKDRPTWLRH. Over residues 325–335 the composition is skewed to basic residues; sequence NQKKKTVRRGK.

This sequence belongs to the peptidase M48B family. Requires Zn(2+) as cofactor.

It is found in the cell inner membrane. The polypeptide is Protease HtpX homolog (Bartonella bacilliformis (strain ATCC 35685 / KC583 / Herrer 020/F12,63)).